Here is a 477-residue protein sequence, read N- to C-terminus: Aspartyl/glutamyl-tRNA(Asn/Gln) amidotransferase subunit B (477 aa).

This sequence belongs to the GatB/GatE family. GatB subfamily. As to quaternary structure, heterotrimer of A, B and C subunits.

The enzyme catalyses L-glutamyl-tRNA(Gln) + L-glutamine + ATP + H2O = L-glutaminyl-tRNA(Gln) + L-glutamate + ADP + phosphate + H(+). The catalysed reaction is L-aspartyl-tRNA(Asn) + L-glutamine + ATP + H2O = L-asparaginyl-tRNA(Asn) + L-glutamate + ADP + phosphate + 2 H(+). Its function is as follows. Allows the formation of correctly charged Asn-tRNA(Asn) or Gln-tRNA(Gln) through the transamidation of misacylated Asp-tRNA(Asn) or Glu-tRNA(Gln) in organisms which lack either or both of asparaginyl-tRNA or glutaminyl-tRNA synthetases. The reaction takes place in the presence of glutamine and ATP through an activated phospho-Asp-tRNA(Asn) or phospho-Glu-tRNA(Gln). This chain is Aspartyl/glutamyl-tRNA(Asn/Gln) amidotransferase subunit B, found in Legionella pneumophila (strain Paris).